The chain runs to 323 residues: Pantothenate kinase (323 aa).

Positions 1–12 (MAEQNAASTTGV) are enriched in polar residues. The segment at 1-24 (MAEQNAASTTGVKPSPRTPDFSPY) is disordered. Residue 108–115 (GSVAVGKS) participates in ATP binding.

This sequence belongs to the prokaryotic pantothenate kinase family.

The protein localises to the cytoplasm. It catalyses the reaction (R)-pantothenate + ATP = (R)-4'-phosphopantothenate + ADP + H(+). It participates in cofactor biosynthesis; coenzyme A biosynthesis; CoA from (R)-pantothenate: step 1/5. The polypeptide is Pantothenate kinase (Corynebacterium glutamicum (strain R)).